The chain runs to 517 residues: ATP synthase subunit alpha (517 aa).

Residue 175–182 (GDRQTGKT) participates in ATP binding.

It belongs to the ATPase alpha/beta chains family. In terms of assembly, F-type ATPases have 2 components, CF(1) - the catalytic core - and CF(0) - the membrane proton channel. CF(1) has five subunits: alpha(3), beta(3), gamma(1), delta(1), epsilon(1). CF(0) has three main subunits: a(1), b(2) and c(9-12). The alpha and beta chains form an alternating ring which encloses part of the gamma chain. CF(1) is attached to CF(0) by a central stalk formed by the gamma and epsilon chains, while a peripheral stalk is formed by the delta and b chains.

It localises to the cell membrane. The enzyme catalyses ATP + H2O + 4 H(+)(in) = ADP + phosphate + 5 H(+)(out). In terms of biological role, produces ATP from ADP in the presence of a proton gradient across the membrane. The alpha chain is a regulatory subunit. This is ATP synthase subunit alpha from Herpetosiphon aurantiacus (strain ATCC 23779 / DSM 785 / 114-95).